The primary structure comprises 559 residues: Inositol-3-phosphate synthase 1 (559 aa).

Residues Gly-67, Gly-68, Asn-69, Asn-70, Asp-141, Ser-177, Val-178, Gln-188, Arg-191, Thr-228, Ala-229, Asn-230, Thr-231, Gly-278, Ser-279, Asp-303, Ser-306, Asn-337, Asn-338, Asp-339, and Lys-352 each contribute to the NAD(+) site. Position 279 is a phosphoserine (Ser-279). Ser-357 is modified (phosphoserine). Residues Gly-390, Asp-391, Asp-419, and Ser-420 each contribute to the NAD(+) site.

Belongs to the myo-inositol 1-phosphate synthase family. NAD(+) is required as a cofactor.

It localises to the cytoplasm. The catalysed reaction is D-glucose 6-phosphate = 1D-myo-inositol 3-phosphate. The protein operates within polyol metabolism; myo-inositol biosynthesis; myo-inositol from D-glucose 6-phosphate: step 1/2. Functionally, key enzyme in myo-inositol biosynthesis pathway that catalyzes the conversion of glucose 6-phosphate to 1-myo-inositol 1-phosphate in a NAD-dependent manner. Rate-limiting enzyme in the synthesis of all inositol-containing compounds. The chain is Inositol-3-phosphate synthase 1 (ISYNA1) from Macaca fascicularis (Crab-eating macaque).